Reading from the N-terminus, the 342-residue chain is Dual-specificity RNA methyltransferase RlmN (342 aa).

Glu92 acts as the Proton acceptor in catalysis. The region spanning 98 to 329 (DLPRSTLCVS…THVRRSRGGE (232 aa)) is the Radical SAM core domain. An intrachain disulfide couples Cys105 to Cys334. Cys112, Cys116, and Cys119 together coordinate [4Fe-4S] cluster. S-adenosyl-L-methionine contacts are provided by residues 161 to 162 (GE), Ser193, 215 to 217 (SLH), and Asn291. Catalysis depends on Cys334, which acts as the S-methylcysteine intermediate.

Belongs to the radical SAM superfamily. RlmN family. Requires [4Fe-4S] cluster as cofactor.

It localises to the cytoplasm. It catalyses the reaction adenosine(2503) in 23S rRNA + 2 reduced [2Fe-2S]-[ferredoxin] + 2 S-adenosyl-L-methionine = 2-methyladenosine(2503) in 23S rRNA + 5'-deoxyadenosine + L-methionine + 2 oxidized [2Fe-2S]-[ferredoxin] + S-adenosyl-L-homocysteine. The catalysed reaction is adenosine(37) in tRNA + 2 reduced [2Fe-2S]-[ferredoxin] + 2 S-adenosyl-L-methionine = 2-methyladenosine(37) in tRNA + 5'-deoxyadenosine + L-methionine + 2 oxidized [2Fe-2S]-[ferredoxin] + S-adenosyl-L-homocysteine. Specifically methylates position 2 of adenine 2503 in 23S rRNA and position 2 of adenine 37 in tRNAs. m2A2503 modification seems to play a crucial role in the proofreading step occurring at the peptidyl transferase center and thus would serve to optimize ribosomal fidelity. In Syntrophobacter fumaroxidans (strain DSM 10017 / MPOB), this protein is Dual-specificity RNA methyltransferase RlmN.